Reading from the N-terminus, the 336-residue chain is N-acetyl-gamma-glutamyl-phosphate reductase (336 aa).

Cysteine 156 is an active-site residue.

This sequence belongs to the NAGSA dehydrogenase family. Type 1 subfamily.

It localises to the cytoplasm. It carries out the reaction N-acetyl-L-glutamate 5-semialdehyde + phosphate + NADP(+) = N-acetyl-L-glutamyl 5-phosphate + NADPH + H(+). Its pathway is amino-acid biosynthesis; L-arginine biosynthesis; N(2)-acetyl-L-ornithine from L-glutamate: step 3/4. Functionally, catalyzes the NADPH-dependent reduction of N-acetyl-5-glutamyl phosphate to yield N-acetyl-L-glutamate 5-semialdehyde. This Moritella profunda protein is N-acetyl-gamma-glutamyl-phosphate reductase.